The following is a 403-amino-acid chain: Ribosomal RNA large subunit methyltransferase I (403 aa).

Residues 9–88 enclose the PUA domain; sequence YPRLVLSKGR…ESIDIAFFTR (80 aa).

The protein belongs to the methyltransferase superfamily. RlmI family.

It is found in the cytoplasm. It catalyses the reaction cytidine(1962) in 23S rRNA + S-adenosyl-L-methionine = 5-methylcytidine(1962) in 23S rRNA + S-adenosyl-L-homocysteine + H(+). Its function is as follows. Specifically methylates the cytosine at position 1962 (m5C1962) of 23S rRNA. The chain is Ribosomal RNA large subunit methyltransferase I from Salmonella newport (strain SL254).